We begin with the raw amino-acid sequence, 51 residues long: Large ribosomal subunit protein bL33 (51 aa).

Residues 1-23 (MRDKIKLESSAGTGHFYTTTKNK) are disordered. Polar residues predominate over residues 10–20 (SAGTGHFYTTT).

This sequence belongs to the bacterial ribosomal protein bL33 family.

This Chromobacterium violaceum (strain ATCC 12472 / DSM 30191 / JCM 1249 / CCUG 213 / NBRC 12614 / NCIMB 9131 / NCTC 9757 / MK) protein is Large ribosomal subunit protein bL33.